The primary structure comprises 805 residues: Angiotensin-converting enzyme 2 (805 aa).

Positions 1-17 (MSGSSWLLLSLVAVTAA) are cleaved as a signal peptide. Residues 18–740 (QSTIEEQAKT…LGPPNQPPVS (723 aa)) lie on the Extracellular side of the membrane. A Peptidase M2 domain is found at 19–607 (STIEEQAKTF…QNKNSFVGWS (589 aa)). N-linked (GlcNAc...) asparagine glycosylation is found at N53, N90, and N103. A disulfide bridge links C133 with C141. R169 serves as a coordination point for chloride. R273 serves as a coordination point for substrate. The N-linked (GlcNAc...) asparagine glycan is linked to N322. Residues C344 and C361 are joined by a disulfide bond. 345 to 346 (HP) contributes to the substrate binding site. H374 serves as a coordination point for Zn(2+). E375 functions as the Proton acceptor in the catalytic mechanism. 2 residues coordinate Zn(2+): H378 and E402. Residue N432 is glycosylated (N-linked (GlcNAc...) asparagine). 2 residues coordinate chloride: W477 and K481. The active-site Proton donor is H505. Y515 is a substrate binding site. A disulfide bond links C530 and C542. An N-linked (GlcNAc...) asparagine glycan is attached at N546. The Collectrin-like domain occupies 614-805 (ADQSIKVRIS…QNTDDVQTSF (192 aa)). An essential for cleavage by ADAM17 region spans residues 652 to 659 (RKYFLEVK). N-linked (GlcNAc...) asparagine glycosylation occurs at N690. Positions 697 to 716 (RTEVEKAIRMSRSRINDAFR) are essential for cleavage by TMPRSS11D and TMPRSS2. The chain crosses the membrane as a helical span at residues 741–761 (IWLIVFGVVMGVIVVGIVVLI). Topologically, residues 762 to 805 (FTGIRDRKKKNKARNEENPYASIDISKGENNPGFQNTDDVQTSF) are cytoplasmic. The disordered stretch occupies residues 772 to 805 (NKARNEENPYASIDISKGENNPGFQNTDDVQTSF). Positions 778–786 (ENPYASIDI) match the LIR motif. Y781 is subject to Phosphotyrosine. Positions 781-784 (YASI) match the Endocytic sorting signal motif. The SH2-binding motif lies at 781–785 (YASID). At S783 the chain carries Phosphoserine. A Glycyl lysine isopeptide (Lys-Gly) (interchain with G-Cter in ubiquitin) cross-link involves residue K788. The span at 789-805 (GENNPGFQNTDDVQTSF) shows a compositional bias: polar residues. A PTB motif is present at residues 792 to 795 (NPGF). A PDZ-binding motif is present at residues 803 to 805 (TSF).

It belongs to the peptidase M2 family. Homodimer. Interacts with the catalytically active form of TMPRSS2. Interacts with SLC6A19; this interaction is essential for expression and function of SLC6A19 in intestine. Interacts with ITGA5:ITGB1. Probably interacts (via endocytic sorting signal motif) with AP2M1; the interaction is inhibited by phosphorylation of Tyr-781. Interacts (via PDZ-binding motif) with NHERF1 (via PDZ domains); the interaction may enhance ACE2 membrane residence. Requires Zn(2+) as cofactor. The cofactor is chloride. Post-translationally, proteolytic cleavage by ADAM17 generates a secreted form. Also cleaved by serine proteases: TMPRSS2, TMPRSS11D and HPN/TMPRSS1. In terms of processing, phosphorylated. Phosphorylation at Tyr-781 probably inhibits interaction with AP2M1 and enables interactions with proteins containing SH2 domains. Ubiquitinated. Ubiquitinated on Lys-788 via 'Lys-48'-linked ubiquitin. 'Lys-48'-linked deubiquitinated by USP50 on the Lys-788; leading to its stabilization.

The protein resides in the secreted. Its subcellular location is the cell membrane. The protein localises to the cytoplasm. It localises to the cell projection. It is found in the cilium. The protein resides in the apical cell membrane. The catalysed reaction is angiotensin II + H2O = angiotensin-(1-7) + L-phenylalanine. The enzyme catalyses angiotensin I + H2O = angiotensin-(1-9) + L-leucine. It catalyses the reaction bradykinin(1-8) + H2O = bradykinin(1-7) + L-phenylalanine. It carries out the reaction neurotensin + H2O = neurotensin-(1-12) + L-leucine. The catalysed reaction is kinetensin + H2O = kinetensin-(1-8) + L-leucine. The enzyme catalyses dynorphin A-(1-13) + H2O = dynorphin A-(1-12) + L-lysine. It catalyses the reaction apelin-13 + H2O = apelin-12 + L-phenylalanine. It carries out the reaction [Pyr1]apelin-13 + H2O = [Pyr1]apelin-12 + L-phenylalanine. The catalysed reaction is apelin-17 + H2O = apelin-16 + L-phenylalanine. Functionally, essential counter-regulatory carboxypeptidase of the renin-angiotensin hormone system that is a critical regulator of blood volume, systemic vascular resistance, and thus cardiovascular homeostasis. Converts angiotensin I to angiotensin 1-9, a nine-amino acid peptide with anti-hypertrophic effects in cardiomyocytes, and angiotensin II to angiotensin 1-7, which then acts as a beneficial vasodilator and anti-proliferation agent, counterbalancing the actions of the vasoconstrictor angiotensin II. Also removes the C-terminal residue from three other vasoactive peptides, neurotensin, kinetensin, and des-Arg bradykinin, but is not active on bradykinin. Also cleaves other biological peptides, such as apelins, casomorphins and dynorphin A. Plays an important role in amino acid transport by acting as binding partner of amino acid transporter SLC6A19 in intestine, regulating trafficking, expression on the cell surface, and its catalytic activity. This Pongo abelii (Sumatran orangutan) protein is Angiotensin-converting enzyme 2 (ACE2).